The primary structure comprises 245 residues: Aliphatic sulfonates import ATP-binding protein SsuB 1 (245 aa).

The region spanning 9–227 is the ABC transporter domain; sequence LDLVGIGHRY…HRGDAQLAAW (219 aa). Position 41–48 (41–48) interacts with ATP; that stretch reads GPSGVGKS.

The protein belongs to the ABC transporter superfamily. Aliphatic sulfonates importer (TC 3.A.1.17.2) family. In terms of assembly, the complex is composed of two ATP-binding proteins (SsuB), two transmembrane proteins (SsuC) and a solute-binding protein (SsuA).

Its subcellular location is the cell membrane. The catalysed reaction is ATP + H2O + aliphatic sulfonate-[sulfonate-binding protein]Side 1 = ADP + phosphate + aliphatic sulfonateSide 2 + [sulfonate-binding protein]Side 1.. Functionally, part of the ABC transporter complex SsuABC involved in aliphatic sulfonates import. Responsible for energy coupling to the transport system. The polypeptide is Aliphatic sulfonates import ATP-binding protein SsuB 1 (Rhodococcus jostii (strain RHA1)).